Consider the following 261-residue polypeptide: Small ribosomal subunit protein uS2 (261 aa).

Ser-2 is subject to N-acetylserine. The disordered stretch occupies residues 215-261 (AEEAKTTEDVEEAAPVDADEWTGETEEVDWAESGATPAVEDAAASNW). The segment covering 223-244 (DVEEAAPVDADEWTGETEEVDW) has biased composition (acidic residues).

The protein belongs to the universal ribosomal protein uS2 family. Component of the small ribosomal subunit. Mature ribosomes consist of a small (40S) and a large (60S) subunit. The 40S subunit contains about 33 different proteins and 1 molecule of RNA (18S). The 60S subunit contains about 49 different proteins and 3 molecules of RNA (25S, 5.8S and 5S). Interacts with RPS21.

Its subcellular location is the cytoplasm. In terms of biological role, required for the assembly and/or stability of the 40S ribosomal subunit. Required for the processing of the 20S rRNA-precursor to mature 18S rRNA in a late step of the maturation of 40S ribosomal subunits. The protein is Small ribosomal subunit protein uS2 of Scheffersomyces stipitis (strain ATCC 58785 / CBS 6054 / NBRC 10063 / NRRL Y-11545) (Yeast).